The following is a 125-amino-acid chain: MWARVLKLICEELGDRELFLLEADKDLKWFGAPVKEVCEKVNFDARNSEIAQTVKASLQEVQGEGWIVYVDPFNNFADIYEANKPRYRNRWNQERPYDISETRFRVGFFPSREEAYDSSSRFQRE.

This is an uncharacterized protein from Aquifex aeolicus (strain VF5).